A 374-amino-acid chain; its full sequence is DNA integrity scanning protein DisA (374 aa).

Residues 20–158 (EALMRASLSA…DGERRVLEES (139 aa)) form the DAC domain. ATP contacts are provided by residues glycine 87, leucine 105, and 118 to 122 (TRHRT).

Belongs to the DisA family. In terms of assembly, homooctamer. Mg(2+) is required as a cofactor.

It carries out the reaction 2 ATP = 3',3'-c-di-AMP + 2 diphosphate. Its function is as follows. Participates in a DNA-damage check-point that is active prior to asymmetric division when DNA is damaged. DisA forms globular foci that rapidly scan along the chromosomes during sporulation, searching for lesions. When a lesion is present, DisA pauses at the lesion site. This triggers a cellular response that culminates in a temporary block in sporulation initiation. Functionally, also has diadenylate cyclase activity, catalyzing the condensation of 2 ATP molecules into cyclic di-AMP (c-di-AMP). c-di-AMP acts as a signaling molecule that couples DNA integrity with progression of sporulation. The rise in c-di-AMP level generated by DisA while scanning the chromosome, operates as a positive signal that advances sporulation; upon encountering a lesion, the DisA focus arrests at the damaged site and halts c-di-AMP synthesis. The chain is DNA integrity scanning protein DisA from Streptomyces griseus subsp. griseus (strain JCM 4626 / CBS 651.72 / NBRC 13350 / KCC S-0626 / ISP 5235).